The primary structure comprises 233 residues: MLLWMVLLLCVSMTEAQELFQDPVLSRLNSSETSDLLLKCTTKVDPNKPASELFYSFYKDNHIIQNRSHNPLFFISEANEENSGLYQCVVDAKDGTIQKKSDYLDIDLCTSVSQPVLTLQHEATNLAEGDKVKFLCETQLGSLPILYSFYMDGEILGEPLAPSGRAASLLISVKAEWSGKNYSCQAENKVSRDISEPKKFPLVVSGTASMKSTTVVIWLPVSCLVGWPWLLRF.

An N-terminal signal peptide occupies residues 1 to 16 (MLLWMVLLLCVSMTEA). Ig-like domains are found at residues 23–98 (PVLS…GTIQ) and 115–195 (PVLT…RDIS). N-linked (GlcNAc...) asparagine glycans are attached at residues N29, N66, and N181. Disulfide bonds link C40/C88 and C136/C184. G206 carries the GPI-anchor amidated glycine lipid modification. The propeptide at 207–233 (TASMKSTTVVIWLPVSCLVGWPWLLRF) is removed in mature form.

In terms of tissue distribution, NK cells.

The protein localises to the cell membrane. The protein is Cell surface glycoprotein gp42 of Rattus norvegicus (Rat).